The primary structure comprises 183 residues: Der GTPase-activating protein YihI (183 aa).

The segment covering methionine 1–proline 18 has biased composition (low complexity). The disordered stretch occupies residues methionine 1–aspartate 114. A compositionally biased stretch (basic and acidic residues) spans arginine 25 to glutamate 34. Low complexity predominate over residues asparagine 56–alanine 65. Basic and acidic residues predominate over residues proline 92 to aspartate 114.

The protein belongs to the YihI family. Interacts with Der.

A GTPase-activating protein (GAP) that modifies Der/EngA GTPase function. May play a role in ribosome biogenesis. In Serratia proteamaculans (strain 568), this protein is Der GTPase-activating protein YihI.